A 207-amino-acid chain; its full sequence is Ras-related protein Rab-7a (207 aa).

Thr-2 bears the N-acetylthreonine mark. 11 residues coordinate GTP: Ser-17, Gly-18, Val-19, Gly-20, Lys-21, Thr-22, Ser-23, Ser-34, Asn-35, Tyr-37, and Thr-40. Position 22 (Thr-22) interacts with Mg(2+). The short motif at 28 to 41 (YVNKKFSNQYKATI) is the Switch 1 element. Mg(2+) is bound by residues Thr-40 and Asp-63. Gly-66 contacts GTP. A Switch 2 motif is present at residues 67–82 (QERFQSLGVAFYRGAD). Residue Ser-72 is modified to Phosphoserine. GTP-binding residues include Asn-125, Lys-126, Asp-128, Ala-156, and Lys-157. Glycyl lysine isopeptide (Lys-Gly) (interchain with G-Cter in ubiquitin) cross-links involve residues Lys-191 and Lys-194. Residues Cys-205 and Cys-207 are each lipidated (S-geranylgeranyl cysteine). At Cys-207 the chain carries Cysteine methyl ester.

This sequence belongs to the small GTPase superfamily. Rab family. As to quaternary structure, interacts with NTRK1/TRKA. Interacts with RILP. Interacts with PSMA7. Interacts with RNF115. Interacts with FYCO1. Interacts with the PIK3C3/VPS34-PIK3R4 complex. The GTP-bound form interacts with OSBPL1A. The GTP-bound form interacts with RAC1. Interacts with CLN3. Interacts with CHM, the substrate-binding subunit of the Rab geranylgeranyltransferase complex. Interacts with C9orf72. Does not interact with HPS4 and the BLOC-3 complex (heterodimer of HPS1 and HPS4). Interacts with CLN5. Interacts with PLEKHM1 (via N- and C-terminus). Interacts with PRPH; the interaction is direct. Interacts with VPS13A. The GDP-bound form interacts with RIMOC1. Interacts with the MON1A-CCZ1B complex and this interaction is enhanced in the presence of RIMOC1. Interacts with VPS39 and VPS41. Forms a ternary complex with LAMP2 and RUFY4; the interaction with LAMP2 is mediated by RUFY4 (via RUN and coiled coil domains). Requires Mg(2+) as cofactor. In terms of processing, deubiquitination at Lys-191 and Lys-194 by USP32. Phosphorylated at Ser-72 by LRRK1; phosphorylation is dependent on protein kinase C (PKC) activation of LRRK1. Post-translationally, prenylated. Prenylation is required for association with cellular membranes.

The protein resides in the cytoplasmic vesicle. It is found in the phagosome membrane. The protein localises to the late endosome membrane. It localises to the lysosome membrane. Its subcellular location is the melanosome membrane. The protein resides in the autophagosome membrane. It is found in the lipid droplet. The protein localises to the endosome membrane. It localises to the mitochondrion membrane. The enzyme catalyses GTP + H2O = GDP + phosphate + H(+). Regulated by guanine nucleotide exchange factors (GEFs) which promote the exchange of bound GDP for free GTP. Regulated by GTPase activating proteins (GAPs) which increase the GTP hydrolysis activity. Inhibited by GDP dissociation inhibitors (GDIs). Functionally, the small GTPases Rab are key regulators of intracellular membrane trafficking, from the formation of transport vesicles to their fusion with membranes. Rabs cycle between an inactive GDP-bound form and an active GTP-bound form that is able to recruit to membranes different sets of downstream effectors directly responsible for vesicle formation, movement, tethering and fusion. In its active state, RAB7A binds to a variety of effector proteins playing a key role in the regulation of endo-lysosomal trafficking. Governs early-to-late endosomal maturation, microtubule minus-end as well as plus-end directed endosomal migration and positioning, and endosome-lysosome transport through different protein-protein interaction cascades. Also plays a central role in growth-factor-mediated cell signaling, nutrient-transporter-mediated nutrient uptake, neurotrophin transport in the axons of neurons and lipid metabolism. Also involved in regulation of some specialized endosomal membrane trafficking, such as maturation of melanosomes, pathogen-induced phagosomes (or vacuoles) and autophagosomes. Plays a role in the maturation and acidification of phagosomes that engulf pathogens, such as S.aureus and Mycobacteria. Plays a role in the fusion of phagosomes with lysosomes. In concert with RAC1, plays a role in regulating the formation of RBs (ruffled borders) in osteoclasts. Controls the endosomal trafficking and neurite outgrowth signaling of NTRK1/TRKA. Regulates the endocytic trafficking of the EGF-EGFR complex by regulating its lysosomal degradation. Involved in the ADRB2-stimulated lipolysis through lipophagy, a cytosolic lipase-independent autophagic pathway. Required for the exosomal release of SDCBP, CD63 and syndecan. Required for vesicular trafficking and cell surface expression of ACE2. May play a role in PRPH neuronal intermediate filament assembly. The protein is Ras-related protein Rab-7a (RAB7A) of Canis lupus familiaris (Dog).